Here is a 140-residue protein sequence, read N- to C-terminus: ATP synthase epsilon chain (140 aa).

Belongs to the ATPase epsilon chain family. In terms of assembly, F-type ATPases have 2 components, CF(1) - the catalytic core - and CF(0) - the membrane proton channel. CF(1) has five subunits: alpha(3), beta(3), gamma(1), delta(1), epsilon(1). CF(0) has three main subunits: a, b and c.

The protein resides in the cell inner membrane. In terms of biological role, produces ATP from ADP in the presence of a proton gradient across the membrane. In Colwellia maris, this protein is ATP synthase epsilon chain.